The primary structure comprises 223 residues: Ribonuclease S-2 (223 aa).

The N-terminal stretch at 1–22 is a signal peptide; it reads MAKSQLVSALFVFFFSLSPIYG. A disulfide bond links Cys38 and Cys44. An N-linked (GlcNAc...) asparagine glycan is attached at Asn51. The active-site Proton donor is the His55. Residues His55 and 94–95 contribute to the RNA site; that span reads QL. Cystine bridges form between Cys71-Cys119, Cys178-Cys211, and Cys194-Cys205. Gln112 is a catalytic residue. 115-116 is a binding site for RNA; that stretch reads KH. Catalysis depends on His116, which acts as the Proton acceptor.

Belongs to the RNase T2 family. As to expression, pistil.

It localises to the secreted. The protein resides in the extracellular space. The catalysed reaction is a ribonucleotidyl-ribonucleotide-RNA + H2O = a 3'-end 3'-phospho-ribonucleotide-RNA + a 5'-end dephospho-ribonucleoside-RNA + H(+). Functionally, self-incompatibility (SI) is the inherited ability of a flowering plant to prevent self-fertilization by discriminating between self and non-self pollen during pollination. In many species of the Solanaceae, self-incompatibility is controlled by the single, multiallelic locus S. This stylar glycoprotein is associated with expression of self-incompatibility in potato. The polypeptide is Ribonuclease S-2 (Solanum tuberosum (Potato)).